A 125-amino-acid polypeptide reads, in one-letter code: Large ribosomal subunit protein bL12 (125 aa).

This sequence belongs to the bacterial ribosomal protein bL12 family. Homodimer. Part of the ribosomal stalk of the 50S ribosomal subunit. Forms a multimeric L10(L12)X complex, where L10 forms an elongated spine to which 2 to 4 L12 dimers bind in a sequential fashion. Binds GTP-bound translation factors.

Its function is as follows. Forms part of the ribosomal stalk which helps the ribosome interact with GTP-bound translation factors. Is thus essential for accurate translation. This Porphyromonas gingivalis (strain ATCC 33277 / DSM 20709 / CIP 103683 / JCM 12257 / NCTC 11834 / 2561) protein is Large ribosomal subunit protein bL12.